A 466-amino-acid polypeptide reads, in one-letter code: Communesin N16 acyltransferase cnsK (466 aa).

Belongs to the fumigaclavine B O-acetyltransferase family.

It functions in the pathway alkaloid biosynthesis. Functionally, communesin N16 acyltransferase; part of the gene cluster that mediates the biosynthesis of communesins, a prominent class of indole alkaloids with great potential as pharmaceuticals. Communesins are biosynthesized by the coupling of tryptamine and aurantioclavine, two building blocks derived from L-tryptophan. The L-tryptophan decarboxylase cnsB converts L-tryptophan to tryptamine, whereas the tryptophan dimethylallyltransferase cnsF converts L-tryptophan to 4-dimethylallyl tryptophan which is further transformed to aurantioclavine by the aurantioclavine synthase cnsA, probably aided by the catalase cnsD. The cytochrome P450 monooxygenase cnsC catalyzes the heterodimeric coupling between the two different indole moieties, tryptamine and aurantioclavine, to construct vicinal quaternary stereocenters and yield the heptacyclic communesin scaffold. The O-methyltransferase cnsE then methylates the communesin scaffold to produce communesin K, the simplest characterized communesin that contains the heptacyclic core. The dioxygenase cnsJ converts communesin K into communesin I. Acylation to introduce the hexadienyl group at position N16 of communesin I by the acyltransferase cnsK leads to the production of communesin B. The hexadienyl group is produced by the highly reducing polyketide synthase cnsI, before being hydrolytically removed from cnsI by the serine hydrolase cnsH, converted into hexadienyl-CoA by the CoA ligase cnsG, and then transferred to communesin I by cnsK. Surprisingly, cnsK may also be a promiscuous acyltransferase that can tolerate a range of acyl groups, including acetyl-, propionyl-, and butyryl-CoA, which lead to communesins A, G and H respectively. The roles of the alpha-ketoglutarate-dependent dioxygenases cnsM and cnsP have still to be determined. The protein is Communesin N16 acyltransferase cnsK of Penicillium expansum (Blue mold rot fungus).